Consider the following 237-residue polypeptide: Uridylate kinase (237 aa).

10–13 (KLSG) is an ATP binding site. Gly-52 serves as a coordination point for UMP. ATP-binding residues include Gly-53 and Arg-57. Residues Asp-72 and 133-140 (TGNPFFTT) contribute to the UMP site. ATP-binding residues include Thr-160, Tyr-166, and Asp-169.

This sequence belongs to the UMP kinase family. In terms of assembly, homohexamer.

The protein resides in the cytoplasm. It carries out the reaction UMP + ATP = UDP + ADP. It functions in the pathway pyrimidine metabolism; CTP biosynthesis via de novo pathway; UDP from UMP (UMPK route): step 1/1. Inhibited by UTP. Functionally, catalyzes the reversible phosphorylation of UMP to UDP. This chain is Uridylate kinase, found in Thiobacillus denitrificans (strain ATCC 25259 / T1).